The primary structure comprises 326 residues: Acetyl-coenzyme A carboxylase carboxyl transferase subunit alpha (326 aa).

One can recognise a CoA carboxyltransferase C-terminal domain in the interval 44–298; that stretch reads QLESRAEQLR…KEALLFHLNT (255 aa).

Belongs to the AccA family. Acetyl-CoA carboxylase is a heterohexamer composed of biotin carboxyl carrier protein (AccB), biotin carboxylase (AccC) and two subunits each of ACCase subunit alpha (AccA) and ACCase subunit beta (AccD).

It is found in the cytoplasm. It carries out the reaction N(6)-carboxybiotinyl-L-lysyl-[protein] + acetyl-CoA = N(6)-biotinyl-L-lysyl-[protein] + malonyl-CoA. It functions in the pathway lipid metabolism; malonyl-CoA biosynthesis; malonyl-CoA from acetyl-CoA: step 1/1. Functionally, component of the acetyl coenzyme A carboxylase (ACC) complex. First, biotin carboxylase catalyzes the carboxylation of biotin on its carrier protein (BCCP) and then the CO(2) group is transferred by the carboxyltransferase to acetyl-CoA to form malonyl-CoA. This is Acetyl-coenzyme A carboxylase carboxyl transferase subunit alpha from Synechocystis sp. (strain ATCC 27184 / PCC 6803 / Kazusa).